The chain runs to 217 residues: Deoxyribose-phosphate aldolase (217 aa).

Residue aspartate 89 is the Proton donor/acceptor of the active site. The active-site Schiff-base intermediate with acetaldehyde is the lysine 151. The active-site Proton donor/acceptor is lysine 180.

The protein belongs to the DeoC/FbaB aldolase family. DeoC type 1 subfamily.

It localises to the cytoplasm. It catalyses the reaction 2-deoxy-D-ribose 5-phosphate = D-glyceraldehyde 3-phosphate + acetaldehyde. Its pathway is carbohydrate degradation; 2-deoxy-D-ribose 1-phosphate degradation; D-glyceraldehyde 3-phosphate and acetaldehyde from 2-deoxy-alpha-D-ribose 1-phosphate: step 2/2. Functionally, catalyzes a reversible aldol reaction between acetaldehyde and D-glyceraldehyde 3-phosphate to generate 2-deoxy-D-ribose 5-phosphate. The chain is Deoxyribose-phosphate aldolase from Metamycoplasma arthritidis (strain 158L3-1) (Mycoplasma arthritidis).